The chain runs to 240 residues: MRIDVLTLFPEMFSIFNHSIIGRAIEKEILKINTVNIRDYTIDKHKKVDDYPYGGGAGMVMAAQPIVDSIKTVKKENKGKVIFLGPKGKTFNQNLAKELAKEEELIFLCGHYEGIDERAYEYIDMEISLGDFVLTGGEMACIPIVDSICRLVDGVLKSSESYEDESFYNGLLEYPQYTRPATYEGKSVPEVLLSGHHENIKKWRKAKSLIITNKVRPDLFKKYKLTEEDKKILKDFNKKL.

Residues Gly-110 and 129-134 contribute to the S-adenosyl-L-methionine site; that span reads LGDFVL.

The protein belongs to the RNA methyltransferase TrmD family. As to quaternary structure, homodimer.

It is found in the cytoplasm. The enzyme catalyses guanosine(37) in tRNA + S-adenosyl-L-methionine = N(1)-methylguanosine(37) in tRNA + S-adenosyl-L-homocysteine + H(+). Functionally, specifically methylates guanosine-37 in various tRNAs. This Clostridium botulinum (strain Langeland / NCTC 10281 / Type F) protein is tRNA (guanine-N(1)-)-methyltransferase.